We begin with the raw amino-acid sequence, 251 residues long: Triosephosphate isomerase (251 aa).

9–11 (NWK) is a binding site for substrate. The active-site Electrophile is the His-95. The active-site Proton acceptor is Glu-167. Residues Gly-173, Ser-212, and 233–234 (GG) contribute to the substrate site.

The protein belongs to the triosephosphate isomerase family. In terms of assembly, homodimer.

It is found in the cytoplasm. It catalyses the reaction D-glyceraldehyde 3-phosphate = dihydroxyacetone phosphate. The protein operates within carbohydrate biosynthesis; gluconeogenesis. Its pathway is carbohydrate degradation; glycolysis; D-glyceraldehyde 3-phosphate from glycerone phosphate: step 1/1. In terms of biological role, involved in the gluconeogenesis. Catalyzes stereospecifically the conversion of dihydroxyacetone phosphate (DHAP) to D-glyceraldehyde-3-phosphate (G3P). This Pseudomonas putida (strain GB-1) protein is Triosephosphate isomerase.